The sequence spans 295 residues: Pyridoxal 5'-phosphate synthase subunit PdxS (295 aa).

Residue Asp-25 coordinates D-ribose 5-phosphate. Lys-82 serves as the catalytic Schiff-base intermediate with D-ribose 5-phosphate. Gly-154 is a D-ribose 5-phosphate binding site. Arg-166 serves as a coordination point for D-glyceraldehyde 3-phosphate. D-ribose 5-phosphate-binding positions include Gly-215 and 236 to 237 (GS).

The protein belongs to the PdxS/SNZ family. In the presence of PdxT, forms a dodecamer of heterodimers.

The enzyme catalyses aldehydo-D-ribose 5-phosphate + D-glyceraldehyde 3-phosphate + L-glutamine = pyridoxal 5'-phosphate + L-glutamate + phosphate + 3 H2O + H(+). The protein operates within cofactor biosynthesis; pyridoxal 5'-phosphate biosynthesis. In terms of biological role, catalyzes the formation of pyridoxal 5'-phosphate from ribose 5-phosphate (RBP), glyceraldehyde 3-phosphate (G3P) and ammonia. The ammonia is provided by the PdxT subunit. Can also use ribulose 5-phosphate and dihydroxyacetone phosphate as substrates, resulting from enzyme-catalyzed isomerization of RBP and G3P, respectively. The polypeptide is Pyridoxal 5'-phosphate synthase subunit PdxS (Actinobacillus pleuropneumoniae serotype 7 (strain AP76)).